The chain runs to 150 residues: Putative HTH-type transcriptional regulator HI_0379 (150 aa).

The HTH rrf2-type domain occupies 2–131 (KLTSKGRYAV…NEITLAELVN (130 aa)).

In Haemophilus influenzae (strain ATCC 51907 / DSM 11121 / KW20 / Rd), this protein is Putative HTH-type transcriptional regulator HI_0379.